The sequence spans 66 residues: Gallinacin-5 (66 aa).

Residues 1–19 (MQILTLLFAVLLLMLRAEP) form the signal peptide. A propeptide spanning residues 20–25 (GLSLAR) is cleaved from the precursor. 3 disulfides stabilise this stretch: Cys31–Cys59, Cys38–Cys53, and Cys43–Cys60.

It belongs to the beta-defensin family. As to expression, strong expression in the tongue and bone marrow. Low expression in the esophagus, trachea, lung, brain and ovary. Expressed in the ovarian stroma, but not in the ovarian follicles.

It localises to the secreted. The protein resides in the cytoplasmic granule. Has bactericidal activity. This chain is Gallinacin-5 (GAL5), found in Gallus gallus (Chicken).